The following is an 884-amino-acid chain: Alanine--tRNA ligase (884 aa).

The Zn(2+) site is built by H562, H566, C674, and H678.

This sequence belongs to the class-II aminoacyl-tRNA synthetase family. Zn(2+) serves as cofactor.

It localises to the cytoplasm. It catalyses the reaction tRNA(Ala) + L-alanine + ATP = L-alanyl-tRNA(Ala) + AMP + diphosphate. In terms of biological role, catalyzes the attachment of alanine to tRNA(Ala) in a two-step reaction: alanine is first activated by ATP to form Ala-AMP and then transferred to the acceptor end of tRNA(Ala). Also edits incorrectly charged Ser-tRNA(Ala) and Gly-tRNA(Ala) via its editing domain. The polypeptide is Alanine--tRNA ligase (Rhizobium johnstonii (strain DSM 114642 / LMG 32736 / 3841) (Rhizobium leguminosarum bv. viciae)).